We begin with the raw amino-acid sequence, 792 residues long: Receptor-like protein 54 (792 aa).

The signal sequence occupies residues 1-21; the sequence is MKSNLAVFFITCFFCCVFVTS. The Extracellular segment spans residues 22–758; it reads DSVYTLPFPF…PKQEHALNWK (737 aa). Asn-68 and Asn-107 each carry an N-linked (GlcNAc...) asparagine glycan. LRR repeat units lie at residues 114 to 137, 139 to 162, 163 to 187, 189 to 209, 211 to 233, 235 to 258, 259 to 282, 283 to 302, 303 to 324, 325 to 349, 351 to 374, and 375 to 399; these read QHLR…GFGR, TYLE…ISNL, SRLT…SLTL, ENID…LFTM, FLVS…NYSA, SKLL…ISKL, ANLI…FLLF, KSLV…GTGS, ENLT…FIKD, LQRL…LWTL, SMLH…IILN, and SSIS…PYVN. The N-linked (GlcNAc...) asparagine glycan is linked to Asn-161. Asn-230 carries an N-linked (GlcNAc...) asparagine glycan. 2 N-linked (GlcNAc...) asparagine glycosylation sites follow: Asn-304 and Asn-314. N-linked (GlcNAc...) asparagine glycosylation is found at Asn-356 and Asn-374. The LRR 13; degenerate repeat unit spans residues 400 to 418; that stretch reads IMAASNNYFTGGIPLIFCK. 4 LRR repeats span residues 419–443, 444–470, 472–489, and 490–515; these read RYRL…LTNV, SLGL…RLVL, DVGH…LVNC, and TTLK…ALTR. Residues Asn-431, Asn-442, Asn-454, Asn-488, and Asn-503 are each glycosylated (N-linked (GlcNAc...) asparagine). One copy of the LRR 18; degenerate repeat lies at 516-536; sequence LEIIVLRSNRFHGPISSPEVS. LRR repeat units follow at residues 539–563, 614–637, 638–661, 662–685, and 687–709; these read FTAL…YFAN, DTYT…IGDL, KSLI…LAKL, KQLE…LREL, and FLGY…TQVG. N-linked (GlcNAc...) asparagine glycosylation is found at Asn-553 and Asn-563. Asn-647 carries N-linked (GlcNAc...) asparagine glycosylation. Residue Asn-692 is glycosylated (N-linked (GlcNAc...) asparagine). The helical transmembrane segment at 759-779 threads the bilayer; the sequence is AAAIGYGPGVLFGLAIGQAFA. Residues 780–792 are Cytoplasmic-facing; that stretch reads RYKPVLFYKLFRL.

Belongs to the RLP family.

The protein resides in the cell membrane. The polypeptide is Receptor-like protein 54 (Arabidopsis thaliana (Mouse-ear cress)).